The primary structure comprises 447 residues: ATP-dependent protease ATPase subunit HslU (447 aa).

Residues Ile18, 60 to 65, Asp259, Glu325, and Arg397 contribute to the ATP site; that span reads GVGKTE.

This sequence belongs to the ClpX chaperone family. HslU subfamily. A double ring-shaped homohexamer of HslV is capped on each side by a ring-shaped HslU homohexamer. The assembly of the HslU/HslV complex is dependent on binding of ATP.

It is found in the cytoplasm. In terms of biological role, ATPase subunit of a proteasome-like degradation complex; this subunit has chaperone activity. The binding of ATP and its subsequent hydrolysis by HslU are essential for unfolding of protein substrates subsequently hydrolyzed by HslV. HslU recognizes the N-terminal part of its protein substrates and unfolds these before they are guided to HslV for hydrolysis. The chain is ATP-dependent protease ATPase subunit HslU from Burkholderia pseudomallei (strain 668).